Consider the following 401-residue polypeptide: MQCRKCCFACEKWCFIGAKAFLPLVVNFLIIWACWVHAWLVCWEPQLFESDTTFWRVYGVAGVAIGIMCNVLYLKVCKVGPGSPTDIDNFSVPLVEYQNACSAEGQHLTPPREMANSVCAKENGGLRFCTKCIGWKPDRSHHCSNYKRCVLKFDHYCPWFATAIGFHNHKYFVLFLWYVTILCFFCLGSTGFVFYNHILEIGAMRGPDGNTDYVGAISVNVMILMVLALVFAIAVGTFATFSLYLVFNNQSTVEFLESTQYRSAVPTAAYRYTFAPTSKTVGNVFDVGWKRNFQLVMGDKWWMWLLPIQPSEAARGNGTQFPLNKQVLQKIREAAAKEVQIRDQNQAYIKQQRQQQQKRTQYDLPQHLQPPPQEHYEYDDEAQDSGDDIPLINMVNKNNTK.

Residues 1 to 20 (MQCRKCCFACEKWCFIGAKA) are Cytoplasmic-facing. Residues 21–41 (FLPLVVNFLIIWACWVHAWLV) form a helical membrane-spanning segment. Over 42 to 56 (CWEPQLFESDTTFWR) the chain is Lumenal. A helical transmembrane segment spans residues 57-77 (VYGVAGVAIGIMCNVLYLKVC). Topologically, residues 78–171 (KVGPGSPTDI…TAIGFHNHKY (94 aa)) are cytoplasmic. In terms of domain architecture, DHHC spans 127–177 (RFCTKCIGWKPDRSHHCSNYKRCVLKFDHYCPWFATAIGFHNHKYFVLFLW). The S-palmitoyl cysteine intermediate role is filled by cysteine 157. The chain crosses the membrane as a helical span at residues 172 to 192 (FVLFLWYVTILCFFCLGSTGF). Residues 193 to 220 (VFYNHILEIGAMRGPDGNTDYVGAISVN) are Lumenal-facing. A helical transmembrane segment spans residues 221 to 241 (VMILMVLALVFAIAVGTFATF). The Cytoplasmic portion of the chain corresponds to 242 to 401 (SLYLVFNNQS…INMVNKNNTK (160 aa)). Residues 351 to 367 (QQRQQQQKRTQYDLPQH) are compositionally biased toward low complexity. The tract at residues 351-401 (QQRQQQQKRTQYDLPQHLQPPPQEHYEYDDEAQDSGDDIPLINMVNKNNTK) is disordered. Residues 377-387 (EYDDEAQDSGD) show a composition bias toward acidic residues.

The protein belongs to the DHHC palmitoyltransferase family. PFA3 subfamily.

It localises to the vacuole membrane. It carries out the reaction L-cysteinyl-[protein] + hexadecanoyl-CoA = S-hexadecanoyl-L-cysteinyl-[protein] + CoA. Its function is as follows. Palmitoyltransferase specific for VAC8. Palmitoylates VAC8 at one or more of its N-terminal cysteine residues, which is required for its proper membrane localization. The polypeptide is Palmitoyltransferase PFA3 (PFA3) (Yarrowia lipolytica (strain CLIB 122 / E 150) (Yeast)).